The following is a 126-amino-acid chain: Apolipoprotein C-IV (126 aa).

A signal peptide spans 1 to 27 (MSLLRHRLQALPSLCLCVLVLACIGAC).

The protein belongs to the apolipoprotein C4 family.

Its subcellular location is the secreted. May participate in lipoprotein metabolism. This Aotus nancymaae (Ma's night monkey) protein is Apolipoprotein C-IV (APOC4).